The following is a 284-amino-acid chain: NAD/NADP-dependent indole-3-acetaldehyde reductase (284 aa).

Residue D49 coordinates NADPH. Residues Y54 and H109 each act as proton donor in the active site. Positions 143, 165, 196, 201, 239, 240, 241, 242, 243, and 246 each coordinate NADPH.

It belongs to the aldo/keto reductase family. In terms of assembly, monomer.

It is found in the cytoplasm. It localises to the nucleus. The enzyme catalyses indole-3-ethanol + NAD(+) = indole-3-acetaldehyde + NADH + H(+). The catalysed reaction is indole-3-ethanol + NADP(+) = indole-3-acetaldehyde + NADPH + H(+). In Schizosaccharomyces pombe (strain 972 / ATCC 24843) (Fission yeast), this protein is NAD/NADP-dependent indole-3-acetaldehyde reductase.